The sequence spans 358 residues: Alpha-ketoglutarate-dependent L-arginine hydroxylase (358 aa).

The interval 1-21 (MTESPTTHHGAAPPDSVATPV) is disordered. The helical transmembrane segment at 117 to 135 (LSFLLMLYAGLLGDVFGWA) threads the bilayer. An L-arginine-binding site is contributed by 156–158 (LVS). Fe cation is bound by residues H168 and E170. 2-oxoglutarate is bound at residue T194. 268–270 (DGD) serves as a coordination point for L-arginine. Fe cation is bound at residue H316. 2-oxoglutarate-binding residues include R330 and R334. L-arginine is bound at residue R334.

This sequence belongs to the clavaminate synthase family. It depends on Fe cation as a cofactor.

It is found in the membrane. The enzyme catalyses L-arginine + 2-oxoglutarate + O2 = (2S,3S)-hydroxyarginine + succinate + CO2. It participates in antibiotic biosynthesis. Its function is as follows. Involved in the biosynthesis of capreomycidine, an unusual amino acid used by non-ribosomal peptide synthases (NRPS) to make the tuberactinomycin class of peptide antibiotics such as viomycin and capreomycin. Catalyzes the stereospecific hydroxylation of the C3 of (2S)-arginine to generate (3S)-hydroxy-(2S)-arginine. Usually clavaminic acid synthase-like oxygenases catalyze the formation of threo diastereomers, however VioC produces the erythro diastereomer of beta-carbon-hydroxylated L-arginine. It exerts a broad substrate specificity by accepting the analogs L-homoarginine and L-canavanine for the beta-carbon hydroxylation. In Streptomyces vinaceus, this protein is Alpha-ketoglutarate-dependent L-arginine hydroxylase (vioC).